Reading from the N-terminus, the 366-residue chain is uncharacterized protein (366 aa).

6 consecutive transmembrane segments (helical) span residues 30 to 50, 66 to 86, 136 to 156, 162 to 182, 198 to 218, and 225 to 245; these read FWTY…AVGI, IIIA…IIVI, IFIS…GYLA, IILF…LDLL, IGVV…IYDI, and YIPE…IIDV.

It is found in the cell membrane. This is an uncharacterized protein from Methanocaldococcus jannaschii (strain ATCC 43067 / DSM 2661 / JAL-1 / JCM 10045 / NBRC 100440) (Methanococcus jannaschii).